The sequence spans 486 residues: MNETEYFVVDTPGFEDEGGAWATFCEIAQLLDHIREHAVIVAIFFVTPINIFKRRPDPFEEKLYTWLREMSGERFMKYVTFVTTFWEAHNPDQLERYNDFLVRRKEQEWARFIKHGAQTYQFGKVYSAGVETTLHWDTDAEQLAAQAREMIRVYCHEIPIIQPLILHELNMNMGLGSTAAGQVLWPAGDGGTNDQGPSRAQSTASSGGSGRPRSTESPQSGAQASTTPTSPPTTQSTGDDPAAPGGWAWFREFAWEITKRYGPQIVEHVINRQFGSAGAIIGGNGGDFASSMQCMSAKGFDINSVTDTAKFFGKASDMGSRGPNGPIGNGPIIFSIKLQGSYFAQFLNRWQNEDIQAFDPKVDAVNDFMEQKDLFMETTVWNTHCQSWYKSRQTGKITALWPGSTLHYMETLAKPRYDDFDITYASKNRFAYLGNGFSQDELNPQADITYYIRDKDDGLSVFGNLFSTYNAKDIGDKMTALADRAI.

The tract at residues 186–243 is disordered; it reads PAGDGGTNDQGPSRAQSTASSGGSGRPRSTESPQSGAQASTTPTSPPTTQSTGDDPAA. Over residues 194 to 206 the composition is skewed to polar residues; the sequence is DQGPSRAQSTASS. The segment covering 220–241 has biased composition (low complexity); that stretch reads SGAQASTTPTSPPTTQSTGDDP.

This sequence belongs to the FAD-binding monooxygenase family. In terms of assembly, homodimer. FAD is required as a cofactor.

Probable FAD-binding monooxygenase; part of the gene cluster that mediates the biosynthesis of luteodienoside A, a glycosylated polyketide consisting of an unusual 1-O-beta-D-glucopyranosyl-myo-inositol (glucinol) ester of 3-hydroxy-2,2,4-trimethylocta-4,6-dienoic acid. The HR-PKS ltbA produces the trimethylated polyketide chain from acetyl-CoA, malonyl-CoA and S-adenosylmethionine (SAM), and the ltbA cAT domain then uses glucinol produced by the glycosyltransferase ltbB as an offloading substrate to release luteodienoside A. Since ltbA and ltbB are sufficient for the biosynthesis of luteodienoside A, the functions of the methyltransferase ltbC and the FAD-binding monooxygenase ltbD within the pathway remain obscur. This Aspergillus luteorubrus protein is Probable FAD-binding monooxygenase ltbD.